A 435-amino-acid polypeptide reads, in one-letter code: Adenylosuccinate synthetase (435 aa).

GTP contacts are provided by residues glycine 17–lysine 23 and glycine 45–threonine 47. The Proton acceptor role is filled by aspartate 18. Residues aspartate 18 and glycine 45 each coordinate Mg(2+). IMP is bound by residues aspartate 18–lysine 21, asparagine 43–histidine 46, threonine 134, arginine 148, glutamine 229, threonine 244, and arginine 308. Histidine 46 acts as the Proton donor in catalysis. Serine 304 to arginine 310 is a binding site for substrate. GTP contacts are provided by residues arginine 310, lysine 336–aspartate 338, and serine 418–glycine 420.

This sequence belongs to the adenylosuccinate synthetase family. Homodimer. Requires Mg(2+) as cofactor.

It localises to the cytoplasm. It carries out the reaction IMP + L-aspartate + GTP = N(6)-(1,2-dicarboxyethyl)-AMP + GDP + phosphate + 2 H(+). It participates in purine metabolism; AMP biosynthesis via de novo pathway; AMP from IMP: step 1/2. Functionally, plays an important role in the de novo pathway of purine nucleotide biosynthesis. Catalyzes the first committed step in the biosynthesis of AMP from IMP. The protein is Adenylosuccinate synthetase of Bordetella parapertussis (strain 12822 / ATCC BAA-587 / NCTC 13253).